We begin with the raw amino-acid sequence, 693 residues long: Heat shock protein homolog SSE1 (693 aa).

Ser2 bears the N-acetylserine mark. Residue Lys195 forms a Glycyl lysine isopeptide (Lys-Gly) (interchain with G-Cter in ubiquitin) linkage. Thr242 carries the post-translational modification Phosphothreonine. The interval 653–693 (IRSKQEASQMAAMAEKLAAQRKAEAEKKEEKKDTEGDVDMD) is disordered. Ser660 bears the Phosphoserine mark. The span at 673–687 (RKAEAEKKEEKKDTE) shows a compositional bias: basic and acidic residues.

This sequence belongs to the heat shock protein 70 family.

It localises to the cytoplasm. In terms of biological role, has a calcium-dependent calmodulin-binding activity. Required for normal growth at various temperatures. The protein is Heat shock protein homolog SSE1 (SSE1) of Saccharomyces cerevisiae (strain ATCC 204508 / S288c) (Baker's yeast).